We begin with the raw amino-acid sequence, 110 residues long: MTASTVALALFVASILGHCWVTANSTGVASSTERSSPSTAGLSARPSPGPTSVTTPGFYDVACSADSFSPSLSSFSSVWALINALLVVVATFFYLVYLCFFKFVDEVVHA.

A signal peptide spans 1–17 (MTASTVALALFVASILG). Over 18-80 (HCWVTANSTG…SLSSFSSVWA (63 aa)) the chain is Virion surface. Residues 28–41 (VASSTERSSPSTAG) are compositionally biased toward polar residues. Residues 28-51 (VASSTERSSPSTAGLSARPSPGPT) form a disordered region. A helical transmembrane segment spans residues 81–101 (LINALLVVVATFFYLVYLCFF). Residues 102-110 (KFVDEVVHA) lie on the Intravirion side of the membrane.

The protein belongs to the herpesviridae glycoprotein N family. Interacts (via N-terminus) with gM (via N-terminus). The gM-gN heterodimer forms the gCII complex. In terms of processing, O-glycosylated. Contains alpha 2,6-sialic acid residues. N-glycosylated.

It is found in the virion membrane. It localises to the host membrane. The protein resides in the host Golgi apparatus. The protein localises to the host trans-Golgi network. Functionally, envelope glycoprotein necessary for proper maturation of gM and modulation of its membrane fusion activity. Also plays a critical role in virion morphogenesis. This Homo sapiens (Human) protein is Envelope glycoprotein N.